Reading from the N-terminus, the 287-residue chain is 4-hydroxybenzoate octaprenyltransferase (287 aa).

The next 8 helical transmembrane spans lie at 19–39 (PIGS…AADG), 43–63 (LHVL…GCVI), 94–116 (LALA…PLVI), 135–155 (FFAI…PMGF), 160–180 (GEVP…AVAY), 207–227 (FDVA…GWVG), 234–254 (ALYF…YTLI), and 269–286 (NNWL…DYLI).

This sequence belongs to the UbiA prenyltransferase family. Requires Mg(2+) as cofactor.

It is found in the cell inner membrane. The catalysed reaction is all-trans-octaprenyl diphosphate + 4-hydroxybenzoate = 4-hydroxy-3-(all-trans-octaprenyl)benzoate + diphosphate. It functions in the pathway cofactor biosynthesis; ubiquinone biosynthesis. Catalyzes the prenylation of para-hydroxybenzoate (PHB) with an all-trans polyprenyl group. Mediates the second step in the final reaction sequence of ubiquinone-8 (UQ-8) biosynthesis, which is the condensation of the polyisoprenoid side chain with PHB, generating the first membrane-bound Q intermediate 3-octaprenyl-4-hydroxybenzoate. This is 4-hydroxybenzoate octaprenyltransferase from Azoarcus sp. (strain BH72).